A 302-amino-acid chain; its full sequence is MAGRELSHLQQLEAESIQIIREVAAEFDNPVMLYSIGKDSSVMLHLARKAFYPGKIPFPLLHVDTGWKFKEMIAFRDAQAKKFGFELLAHINPEGLAQGINPFDHGSAKHTDIMKTQGLKQALNQYGFDAAFGGARRDEEKSRAKERVYSFRDRHHRWDPKNQRPELWRTYNGAVNKGESIRVFPLSNWTELDIWQYIYQENIELVPLYFAAKRQVVERGGQLIMADDERMKLAEGEQFKEELVRFRTLGCYPLTAAMHSEADSLEKIIEEMLLTRSSERQGRLIDSDQSASMEQKKRQGYF.

The interval 280–302 (RQGRLIDSDQSASMEQKKRQGYF) is disordered.

Belongs to the PAPS reductase family. CysD subfamily. As to quaternary structure, heterodimer composed of CysD, the smaller subunit, and CysN.

The catalysed reaction is sulfate + ATP + H(+) = adenosine 5'-phosphosulfate + diphosphate. Its pathway is sulfur metabolism; hydrogen sulfide biosynthesis; sulfite from sulfate: step 1/3. In terms of biological role, with CysN forms the ATP sulfurylase (ATPS) that catalyzes the adenylation of sulfate producing adenosine 5'-phosphosulfate (APS) and diphosphate, the first enzymatic step in sulfur assimilation pathway. APS synthesis involves the formation of a high-energy phosphoric-sulfuric acid anhydride bond driven by GTP hydrolysis by CysN coupled to ATP hydrolysis by CysD. The protein is Sulfate adenylyltransferase subunit 2 of Shewanella baltica (strain OS185).